Reading from the N-terminus, the 310-residue chain is ADP-L-glycero-D-manno-heptose-6-epimerase (310 aa).

NADP(+)-binding positions include 10–11 (FI), 31–32 (DN), K38, K53, 75–79 (EGACS), and N92. Y140 functions as the Proton acceptor in the catalytic mechanism. K144 serves as a coordination point for NADP(+). N169 provides a ligand contact to substrate. Positions 170 and 178 each coordinate NADP(+). K178 functions as the Proton acceptor in the catalytic mechanism. Substrate-binding positions include S180, H187, 201-204 (FEGS), R209, and Y272.

Belongs to the NAD(P)-dependent epimerase/dehydratase family. HldD subfamily. Homopentamer. Requires NADP(+) as cofactor.

It carries out the reaction ADP-D-glycero-beta-D-manno-heptose = ADP-L-glycero-beta-D-manno-heptose. It functions in the pathway nucleotide-sugar biosynthesis; ADP-L-glycero-beta-D-manno-heptose biosynthesis; ADP-L-glycero-beta-D-manno-heptose from D-glycero-beta-D-manno-heptose 7-phosphate: step 4/4. Its pathway is bacterial outer membrane biogenesis; LPS core biosynthesis. Functionally, catalyzes the interconversion between ADP-D-glycero-beta-D-manno-heptose and ADP-L-glycero-beta-D-manno-heptose via an epimerization at carbon 6 of the heptose. This Klebsiella pneumoniae protein is ADP-L-glycero-D-manno-heptose-6-epimerase.